The sequence spans 484 residues: UDP-N-acetylmuramate--L-alanine ligase (484 aa).

Residue 125–131 coordinates ATP; sequence GTHGKTT.

This sequence belongs to the MurCDEF family.

The protein resides in the cytoplasm. The catalysed reaction is UDP-N-acetyl-alpha-D-muramate + L-alanine + ATP = UDP-N-acetyl-alpha-D-muramoyl-L-alanine + ADP + phosphate + H(+). It functions in the pathway cell wall biogenesis; peptidoglycan biosynthesis. Its function is as follows. Cell wall formation. The chain is UDP-N-acetylmuramate--L-alanine ligase from Buchnera aphidicola subsp. Acyrthosiphon pisum (strain Tuc7).